The primary structure comprises 121 residues: Phospholipase A2 homolog ECO_00035 (121 aa).

Cystine bridges form between Cys25–Cys114, Cys27–Cys43, Cys42–Cys94, Cys48–Cys121, Cys49–Cys87, Cys56–Cys80, and Cys74–Cys85. Positions 104–116 (KKYKIYPNILCRG) are important for membrane-damaging activities in eukaryotes and bacteria; heparin-binding.

Belongs to the phospholipase A2 family. Group II subfamily. S49 sub-subfamily. As to quaternary structure, monomer. As to expression, expressed by the venom gland.

The protein localises to the secreted. Snake venom phospholipase A2 homolog that lacks enzymatic activity. Shows high myotoxin activities and displays edema-inducing activities. Has cytotoxic activities against HUVEC cells (LC(50)=4.9 uL) and human lung adenocarcinoma A549 cells (LC(50)=3.5 uL). The protein is Phospholipase A2 homolog ECO_00035 of Echis coloratus (Carpet viper).